The primary structure comprises 84 residues: uncharacterized protein (84 aa).

A helical transmembrane segment spans residues 10–32 (AFSLAYYIIIHLLCLSYIYEIIH).

Its subcellular location is the membrane. This is an uncharacterized protein from Saccharomyces cerevisiae (strain ATCC 204508 / S288c) (Baker's yeast).